The primary structure comprises 416 residues: Glutamyl-tRNA reductase (416 aa).

Residues 49-52 (TCNR), Ser-105, 110-112 (EPQ), and Gln-116 contribute to the substrate site. Cys-50 acts as the Nucleophile in catalysis. Position 185–190 (185–190 (GAGETI)) interacts with NADP(+).

Belongs to the glutamyl-tRNA reductase family. Homodimer.

It catalyses the reaction (S)-4-amino-5-oxopentanoate + tRNA(Glu) + NADP(+) = L-glutamyl-tRNA(Glu) + NADPH + H(+). It participates in porphyrin-containing compound metabolism; protoporphyrin-IX biosynthesis; 5-aminolevulinate from L-glutamyl-tRNA(Glu): step 1/2. Catalyzes the NADPH-dependent reduction of glutamyl-tRNA(Glu) to glutamate 1-semialdehyde (GSA). This chain is Glutamyl-tRNA reductase, found in Shewanella denitrificans (strain OS217 / ATCC BAA-1090 / DSM 15013).